The primary structure comprises 349 residues: MDKSKALSAALSQIERQFGKGSVMRLGKNDRSMDIETISSGSLGLDIALGVGGLPKGRIVEIYGPESSGKTTLALHCVAEAQKKGGICAFVDAEHALDPVYARKLGVNVDDLLISQPDHGEQALEIADTLVRSGAIDVLIVDSVAALVPRAELEGEMGDALPGLQARLMSQALRKLTASINKSNTMVIFINQIRMKIGVMYGSPETTTGGNALKFYASVRLDIRRIGQIKERDEVVGNQTRVKVVKNKLAPPFKQVEFDIMYGEGVSKMGEILDLGVKAGIVEKSGAWFSHDSQRLGQGRENAKAFLKANPDMTAKIEAAIRQNSGLIAEQILAGSPESDADGEEPMEE.

64–71 (GPESSGKT) is an ATP binding site.

It belongs to the RecA family.

It localises to the cytoplasm. Can catalyze the hydrolysis of ATP in the presence of single-stranded DNA, the ATP-dependent uptake of single-stranded DNA by duplex DNA, and the ATP-dependent hybridization of homologous single-stranded DNAs. It interacts with LexA causing its activation and leading to its autocatalytic cleavage. This Rhodopseudomonas palustris (strain ATCC BAA-98 / CGA009) protein is Protein RecA.